The following is a 159-amino-acid chain: Ribosomal RNA large subunit methyltransferase H (159 aa).

S-adenosyl-L-methionine is bound by residues isoleucine 75, glycine 108, and 127-132 (FGRMTL).

The protein belongs to the RNA methyltransferase RlmH family. As to quaternary structure, homodimer.

The protein resides in the cytoplasm. It catalyses the reaction pseudouridine(1915) in 23S rRNA + S-adenosyl-L-methionine = N(3)-methylpseudouridine(1915) in 23S rRNA + S-adenosyl-L-homocysteine + H(+). Specifically methylates the pseudouridine at position 1915 (m3Psi1915) in 23S rRNA. The protein is Ribosomal RNA large subunit methyltransferase H of Lactococcus lactis subsp. lactis (strain IL1403) (Streptococcus lactis).